Reading from the N-terminus, the 183-residue chain is Ubiquitin-conjugating enzyme E2 6 (183 aa).

In terms of domain architecture, UBC core spans 1–148 (MASPSKRREM…VKEYCEKYAK (148 aa)). C85 acts as the Glycyl thioester intermediate in catalysis. Residues 148 to 183 (KPEEILSDDDDDDSMSEDGSDSDDDDDDEIVGKADP) form a disordered region. Residues 152 to 176 (ILSDDDDDDSMSEDGSDSDDDDDDE) show a composition bias toward acidic residues.

It belongs to the ubiquitin-conjugating enzyme family. As to expression, expressed in roots, petals, sepals and silique walls.

It carries out the reaction S-ubiquitinyl-[E1 ubiquitin-activating enzyme]-L-cysteine + [E2 ubiquitin-conjugating enzyme]-L-cysteine = [E1 ubiquitin-activating enzyme]-L-cysteine + S-ubiquitinyl-[E2 ubiquitin-conjugating enzyme]-L-cysteine.. The protein operates within protein modification; protein ubiquitination. Accepts the ubiquitin from the E1 complex and catalyzes its covalent attachment to other proteins. The chain is Ubiquitin-conjugating enzyme E2 6 (UBC6) from Arabidopsis thaliana (Mouse-ear cress).